We begin with the raw amino-acid sequence, 480 residues long: Aromatic-L-amino-acid decarboxylase (480 aa).

Met1 carries the N-acetylmethionine modification. A run of 2 repeats spans residues 58–115 and 118–178. The segment at 58-178 is 2 X approximate tandem repeats; it reads RDIEKIIMPG…AASPELTQAA (121 aa). Thr82 serves as a coordination point for substrate. Residues Ala148 and Ser149 each contribute to the pyridoxal 5'-phosphate site. His192 contributes to the substrate binding site. 2 residues coordinate pyridoxal 5'-phosphate: Thr246 and Asn300. Lys303 carries the N6-(pyridoxal phosphate)lysine modification.

Belongs to the group II decarboxylase family. Homodimer. The cofactor is pyridoxal 5'-phosphate.

It catalyses the reaction L-dopa + H(+) = dopamine + CO2. The catalysed reaction is 5-hydroxy-L-tryptophan + H(+) = serotonin + CO2. Its pathway is catecholamine biosynthesis; dopamine biosynthesis; dopamine from L-tyrosine: step 2/2. In terms of biological role, catalyzes the decarboxylation of L-3,4-dihydroxyphenylalanine (DOPA) to dopamine and L-5-hydroxytryptophan to serotonin. In Rattus norvegicus (Rat), this protein is Aromatic-L-amino-acid decarboxylase.